Reading from the N-terminus, the 634-residue chain is Phospholipase B (634 aa).

Positions 1 to 19 are cleaved as a signal peptide; sequence MSIITTAFALSLLATTAFA. A PLA2c domain is found at 46-569; that stretch reads DCPSNVTWIR…DTWCWAGDDN (524 aa). N-linked (GlcNAc...) asparagine glycans are attached at residues N50, N56, N122, N231, N246, N269, N311, N340, N384, N430, N478, N498, N525, N550, N569, N591, and N603.

This sequence belongs to the lysophospholipase family. Post-translationally, N-glycosylated.

The protein localises to the secreted. It carries out the reaction a 1-acyl-sn-glycero-3-phosphocholine + H2O = sn-glycerol 3-phosphocholine + a fatty acid + H(+). Its function is as follows. Exhibits phospholipase B (PLB), lysophospholipase (LPL) and lysophospholipase/transacylase (LPTA) activities. This is Phospholipase B (PLB1) from Cryptococcus neoformans var. neoformans serotype D (strain JEC21 / ATCC MYA-565) (Filobasidiella neoformans).